A 372-amino-acid polypeptide reads, in one-letter code: Solute carrier family 35 member F6 (372 aa).

An N-terminal signal peptide occupies residues 1–18 (MAWTKYQLFLAGLMLVTG). The next 2 membrane-spanning stretches (helical) occupy residues 48-68 (FVQA…FYLL) and 89-109 (LLFL…YVAL). In terms of domain architecture, EamA spans 105-160 (MYVALNMTSASSFQMLRGAVIIFTGLFSVAFLDRRLVPSQWLGILITIAGLVVVGL). Asn-110 carries an N-linked (GlcNAc...) asparagine glycan. Transmembrane regions (helical) follow at residues 116 to 136 (SFQM…VAFL), 145 to 165 (WLGI…DLLS), 176 to 196 (VITG…QMVL), 211 to 231 (AVGI…VPMY), 261 to 281 (LIAL…FSGI), 293 to 312 (MVLD…ALGW), and 320 to 336 (ILGF…YNGL). Thr-366 carries the post-translational modification Phosphothreonine.

Belongs to the SLC35F solute transporter family. In terms of assembly, interacts with SLC25A5.

The protein localises to the mitochondrion. It localises to the lysosome membrane. Functionally, involved in the maintenance of mitochondrial membrane potential in pancreatic ductal adenocarcinoma (PDAC) cells. Promotes pancreatic ductal adenocarcinoma (PDAC) cell growth. May play a role as a nucleotide-sugar transporter. The protein is Solute carrier family 35 member F6 (Slc35f6) of Rattus norvegicus (Rat).